A 220-amino-acid polypeptide reads, in one-letter code: GTP-binding nuclear protein GSP2/CNR2 (220 aa).

An N-acetylserine modification is found at S2. At S2 the chain carries Phosphoserine. The Small GTPase Ran-type domain occupies 10–174 (EVPTFKLVLV…LWLARKLAGN (165 aa)). A GTP-binding site is contributed by 21–28 (DGGTGKTT). The segment at 40–48 (KKYIATIGV) is switch-I. GTP-binding positions include G71, 125–128 (NKVD), and 153–155 (SAK). The segment at 71 to 87 (GQEKFGGLRDGYYINAQ) is switch-II.

It belongs to the small GTPase superfamily. Ran family. Found in a nuclear export complex with RanGTP, exportin and pre-miRNA.

The protein resides in the nucleus. In terms of biological role, GTP-binding protein involved in nucleocytoplasmic transport. Required for the import of protein into the nucleus and also for RNA export. Not essential for cell viability. This is GTP-binding nuclear protein GSP2/CNR2 (GSP2) from Saccharomyces cerevisiae (strain ATCC 204508 / S288c) (Baker's yeast).